The chain runs to 1939 residues: Myosin-4 (1939 aa).

Positions 33-82 (DAKSSVFVVDAKESYVKATVQSREGGKVTAKTEGGATVTVKEDQVFSMNP) constitute a Myosin N-terminal SH3-like domain. Ser36 bears the Phosphoserine mark. Residues Thr64 and Thr69 each carry the phosphothreonine modification. Phosphoserine is present on Ser79. The 697-residue stretch at 86–782 (DKIEDMAMMT…LLGTLEEMRD (697 aa)) folds into the Myosin motor domain. An N6,N6,N6-trimethyllysine modification is found at Lys130. 179–186 (GESGAGKT) lines the ATP pocket. Tyr389 carries the post-translational modification Phosphotyrosine. Thr391 carries the post-translational modification Phosphothreonine. Ser392 is modified (phosphoserine). Phosphothreonine is present on Thr419. Tyr424 is modified (phosphotyrosine). Phosphoserine is present on Ser625. The segment at 659 to 681 (LNKLMTNLKSTHPHFVRCLIPNE) is actin-binding. Residue His757 is modified to Pros-methylhistidine. The segment at 761–775 (KFGHTKVFFKAGLLG) is actin-binding. Phosphothreonine is present on Thr776. The region spanning 785–814 (LAQLITRTQAVCRGYLMRVEFRKMMERRES) is the IQ domain. Residues 843-1939 (LLKSAETEKE…EVHTKVISEE (1097 aa)) are a coiled coil. Residues Ser1092 and Ser1096 each carry the phosphoserine modification. Disordered regions lie at residues 1128-1147 (AERASRAKAEKQRSDLSREL) and 1153-1172 (RLEEAGGATSAQIEMNKKRE). Ser1162 and Ser1237 each carry phosphoserine. The residue at position 1241 (Thr1241) is a Phosphothreonine. Ser1243 bears the Phosphoserine mark. Phosphothreonine is present on Thr1255. Ser1261 carries the phosphoserine modification. Thr1265 bears the Phosphothreonine mark. Ser1278 carries the phosphoserine modification. Phosphothreonine is present on Thr1286. Residues Ser1288, Ser1292, Ser1303, Ser1306, and Ser1413 each carry the phosphoserine modification. At Tyr1464 the chain carries Phosphotyrosine. Phosphothreonine is present on Thr1467. Residue Ser1474 is modified to Phosphoserine. Position 1492 is a phosphotyrosine (Tyr1492). Ser1495 carries the post-translational modification Phosphoserine. Residue Thr1501 is modified to Phosphothreonine. Ser1514 carries the post-translational modification Phosphoserine. At Thr1517 the chain carries Phosphothreonine. Phosphoserine is present on residues Ser1542, Ser1547, Ser1554, Ser1574, Ser1600, Ser1603, Ser1714, and Ser1726. Thr1730 and Thr1736 each carry phosphothreonine. Phosphoserine is present on Ser1739.

It belongs to the TRAFAC class myosin-kinesin ATPase superfamily. Myosin family. In terms of assembly, muscle myosin is a hexameric protein that consists of 2 heavy chain subunits (MHC), 2 alkali light chain subunits (MLC) and 2 regulatory light chain subunits (MLC-2).

It localises to the cytoplasm. The protein resides in the myofibril. In terms of biological role, muscle contraction. The protein is Myosin-4 of Rattus norvegicus (Rat).